A 247-amino-acid polypeptide reads, in one-letter code: Probable transcriptional regulatory protein YebC (247 aa).

A disordered region spans residues 1–20 (MAGHSKWANTRHRKAAQDAK).

It belongs to the TACO1 family.

It localises to the cytoplasm. The polypeptide is Probable transcriptional regulatory protein YebC (Salmonella arizonae (strain ATCC BAA-731 / CDC346-86 / RSK2980)).